The sequence spans 388 residues: Glucose-6-phosphate/phosphate translocator 2, chloroplastic (388 aa).

A chloroplast-targeting transit peptide spans 1–68 (MLSSIKPSSS…SASNFKREVK (68 aa)). 8 helical membrane-spanning segments follow: residues 95 to 115 (LKIGIYFATWWALNVVFNIYN), 122 to 142 (FPYPWLTSTLSLACGSLMMLV), 158 to 178 (FWKTLFPVAVAHTIGHVAATV), 211 to 231 (FPLPVYLSLLPIIGGCALAAI), 233 to 253 (ELNFNITGFMGAMISNLAFVF), 281 to 301 (LVILTPFSIAVEGPQMWAAGW), 305 to 325 (VSQVGPNFVWWVVAQSVFYHL), and 358 to 378 (IIIFHTPIQPVNALGAAIAIF). The 119-residue stretch at 113–231 (IYNKKVLNAF…IIGGCALAAI (119 aa)) folds into the EamA domain.

The protein belongs to the TPT transporter family. GPT (TC 2.A.7.9) subfamily. As to expression, expressed in seeds, flowers, stamens, and rosette leaves, with highest levels found in sepals and senescing leaves.

Its subcellular location is the plastid. The protein localises to the chloroplast membrane. Glucose 6-phosphate (Glc6P) transporter. Also transports inorganic phosphate, 3-phosphoglycerate, triose phosphates and, to a leser extent, phosphoenolpyruvate. Responsible for the transport of Glc6P into plastids of heterotrophic tissues where it can be used as a carbon source for starch biosynthesis, as substrate for fatty acid biosynthesis or as substrate for NADPH generation via the oxidative pentose phosphate pathway (OPPP). Required for dynamic acclimation of photosynthesis and partitioning of Glc6P between the chloroplast and the cytosol. May modulate the sensing of sugar status during early seedling development. The chain is Glucose-6-phosphate/phosphate translocator 2, chloroplastic from Arabidopsis thaliana (Mouse-ear cress).